Consider the following 94-residue polypeptide: CRISPR-associated endoribonuclease Cas2 1 (94 aa).

Position 8 (Asp8) interacts with Mg(2+).

This sequence belongs to the CRISPR-associated endoribonuclease Cas2 protein family. Homodimer, forms a heterotetramer with a Cas1 homodimer. Requires Mg(2+) as cofactor.

CRISPR (clustered regularly interspaced short palindromic repeat), is an adaptive immune system that provides protection against mobile genetic elements (viruses, transposable elements and conjugative plasmids). CRISPR clusters contain sequences complementary to antecedent mobile elements and target invading nucleic acids. CRISPR clusters are transcribed and processed into CRISPR RNA (crRNA). Involved in the integration of spacer DNA into the CRISPR cassette. Functions as a ssRNA-specific endoribonuclease. The chain is CRISPR-associated endoribonuclease Cas2 1 (cas21) from Archaeoglobus fulgidus (strain ATCC 49558 / DSM 4304 / JCM 9628 / NBRC 100126 / VC-16).